The primary structure comprises 200 residues: Pyridoxal 5'-phosphate synthase subunit PdxT (200 aa).

52–54 (GES) is a binding site for L-glutamine. Residue C84 is the Nucleophile of the active site. L-glutamine contacts are provided by residues R116 and 145–146 (IR). Active-site charge relay system residues include H181 and E183.

The protein belongs to the glutaminase PdxT/SNO family. In terms of assembly, in the presence of PdxS, forms a dodecamer of heterodimers. Only shows activity in the heterodimer.

The enzyme catalyses aldehydo-D-ribose 5-phosphate + D-glyceraldehyde 3-phosphate + L-glutamine = pyridoxal 5'-phosphate + L-glutamate + phosphate + 3 H2O + H(+). It catalyses the reaction L-glutamine + H2O = L-glutamate + NH4(+). It functions in the pathway cofactor biosynthesis; pyridoxal 5'-phosphate biosynthesis. In terms of biological role, catalyzes the hydrolysis of glutamine to glutamate and ammonia as part of the biosynthesis of pyridoxal 5'-phosphate. The resulting ammonia molecule is channeled to the active site of PdxS. The protein is Pyridoxal 5'-phosphate synthase subunit PdxT of Saccharolobus islandicus (strain M.16.27) (Sulfolobus islandicus).